Consider the following 609-residue polypeptide: Glutamine--fructose-6-phosphate aminotransferase [isomerizing] (609 aa).

The Nucleophile; for GATase activity role is filled by cysteine 2. The region spanning cysteine 2–arginine 218 is the Glutamine amidotransferase type-2 domain. SIS domains lie at alanine 286–leucine 426 and leucine 458–proline 599. The active-site For Fru-6P isomerization activity is the lysine 604.

Homodimer.

The protein resides in the cytoplasm. It catalyses the reaction D-fructose 6-phosphate + L-glutamine = D-glucosamine 6-phosphate + L-glutamate. Catalyzes the first step in hexosamine metabolism, converting fructose-6P into glucosamine-6P using glutamine as a nitrogen source. The chain is Glutamine--fructose-6-phosphate aminotransferase [isomerizing] from Salmonella paratyphi A (strain ATCC 9150 / SARB42).